Here is a 360-residue protein sequence, read N- to C-terminus: Phenylalanine--tRNA ligase alpha subunit (360 aa).

Glu255 provides a ligand contact to Mg(2+).

This sequence belongs to the class-II aminoacyl-tRNA synthetase family. Phe-tRNA synthetase alpha subunit type 1 subfamily. As to quaternary structure, tetramer of two alpha and two beta subunits. It depends on Mg(2+) as a cofactor.

It localises to the cytoplasm. The catalysed reaction is tRNA(Phe) + L-phenylalanine + ATP = L-phenylalanyl-tRNA(Phe) + AMP + diphosphate + H(+). This chain is Phenylalanine--tRNA ligase alpha subunit, found in Rhizorhabdus wittichii (strain DSM 6014 / CCUG 31198 / JCM 15750 / NBRC 105917 / EY 4224 / RW1) (Sphingomonas wittichii).